The primary structure comprises 245 residues: NAD-dependent protein deacylase 1 (245 aa).

The 243-residue stretch at 1–243 folds into the Deacetylase sirtuin-type domain; that stretch reads MDEKLLKTIA…DELVRHVRKA (243 aa). 20–39 is a binding site for NAD(+); it reads GAGVSAESGIPTFRGKDGLW. Substrate-binding residues include tyrosine 64 and arginine 67. 98–101 serves as a coordination point for NAD(+); it reads QNVD. Histidine 116 (proton acceptor) is an active-site residue. The Zn(2+) site is built by cysteine 124, cysteine 127, cysteine 145, and cysteine 148. NAD(+) is bound by residues 185 to 187, 211 to 213, and alanine 229; these read GTS and NPD.

The protein belongs to the sirtuin family. Class III subfamily. Zn(2+) serves as cofactor.

The protein resides in the cytoplasm. The enzyme catalyses N(6)-acetyl-L-lysyl-[protein] + NAD(+) + H2O = 2''-O-acetyl-ADP-D-ribose + nicotinamide + L-lysyl-[protein]. It catalyses the reaction N(6)-succinyl-L-lysyl-[protein] + NAD(+) + H2O = 2''-O-succinyl-ADP-D-ribose + nicotinamide + L-lysyl-[protein]. In terms of biological role, NAD-dependent lysine deacetylase and desuccinylase that specifically removes acetyl and succinyl groups on target proteins. Modulates the activities of several proteins which are inactive in their acylated form. Deacetylates the N-terminal lysine residue of Alba, the major archaeal chromatin protein and that, in turn, increases Alba's DNA binding affinity, thereby repressing transcription. This Archaeoglobus fulgidus (strain ATCC 49558 / DSM 4304 / JCM 9628 / NBRC 100126 / VC-16) protein is NAD-dependent protein deacylase 1.